The following is a 349-amino-acid chain: tRNA (guanine(26)-N(2))-dimethyltransferase (349 aa).

Residues 1–343 enclose the Trm1 methyltransferase domain; that stretch reads MEVEEGRARV…ADRDVVVKIL (343 aa). Positions 25, 50, 66, 92, and 93 each coordinate S-adenosyl-L-methionine.

It belongs to the class I-like SAM-binding methyltransferase superfamily. Trm1 family.

It carries out the reaction guanosine(26) in tRNA + 2 S-adenosyl-L-methionine = N(2)-dimethylguanosine(26) in tRNA + 2 S-adenosyl-L-homocysteine + 2 H(+). In terms of biological role, dimethylates a single guanine residue at position 26 of a number of tRNAs using S-adenosyl-L-methionine as donor of the methyl groups. The polypeptide is tRNA (guanine(26)-N(2))-dimethyltransferase (Archaeoglobus fulgidus (strain ATCC 49558 / DSM 4304 / JCM 9628 / NBRC 100126 / VC-16)).